The chain runs to 291 residues: Small ribosomal subunit protein uS2 (291 aa).

The protein belongs to the universal ribosomal protein uS2 family.

This is Small ribosomal subunit protein uS2 from Lawsonia intracellularis (strain PHE/MN1-00).